The chain runs to 643 residues: Protein tramtrack, beta isoform (643 aa).

The BTB domain maps to 33–98; that stretch reads TDVTLAVEGQ…MYRGEVSVDQ (66 aa). Disordered stretches follow at residues 118–148 and 171–300; these read EVND…PQLQ and ANAG…GLDT. A Glycyl lysine isopeptide (Lys-Gly) (interchain with G-Cter in ubiquitin) cross-link involves residue Lys123. Over residues 125–145 the composition is skewed to low complexity; it reads SPAAAAAGAGATGSESTATTP. Residues 176–187 are compositionally biased toward polar residues; it reads TPTLPVQPSLLS. The segment covering 192–201 has biased composition (basic residues); it reads PKRKRGRPRK. Lys201 participates in a covalent cross-link: Glycyl lysine isopeptide (Lys-Gly) (interchain with G-Cter in ubiquitin). The segment covering 254–285 has biased composition (basic and acidic residues); it reads HTDDLNESRDSLPSKRSKNSKDHRVVSHHEDN. Residues Lys355, Lys397, Lys418, Lys457, Lys478, and Lys480 each participate in a glycyl lysine isopeptide (Lys-Gly) (interchain with G-Cter in ubiquitin) cross-link. 2 consecutive C2H2-type zinc fingers follow at residues 508–531 and 538–561; these read YRCK…VTSH and YPCP…KIIH. Residue Lys545 forms a Glycyl lysine isopeptide (Lys-Gly) (interchain with G-Cter in ubiquitin) linkage. A disordered region spans residues 584–643; that stretch reads GVSGASTPPPPDLSGQNSNQSLPATSNALSTSSSSSTSSSSGSLGPLTTSAPPAPAAAAQ. Residues 604–643 are compositionally biased toward low complexity; it reads SLPATSNALSTSSSSSTSSSSGSLGPLTTSAPPAPAAAAQ.

As to quaternary structure, can form homodimers. Interacts with Trl in vivo via the BTB domain. Interacts with phyl. Interacts with Usp47. Post-translationally, polyubiquitinated by sina. Polyubiquitin linkage is mainly through 'Lys-48', but linkage through 'Lys-63' also occurs. Deubiquitination by Usp47 leads to its stabilization.

Its subcellular location is the nucleus. Functionally, binds to a number of sites in the transcriptional regulatory region of ftz. Isoform beta is required to repress inappropriate segmentation gene transcription and repress genes incompatible with development of photoreceptor cell fates. Probable repressor of the transcription of the segmentation genes ftz, eve, h, odd, run, and en. Inhibits Trl-dependent activation of eve. May bind to the region AGGGC/TGG. Degradation of ttk is directed by binding of sinah or sina, via the adapter molecule phyl which binds to the BTB domain of ttk. A second method of degradation exists that is phyl-independent, this is mediated by recognition of motifs in the C-terminus of ttk. The polypeptide is Protein tramtrack, beta isoform (ttk) (Drosophila melanogaster (Fruit fly)).